The sequence spans 99 residues: Malonate decarboxylase acyl carrier protein (99 aa).

At Ser-25 the chain carries O-(phosphoribosyl dephospho-coenzyme A)serine.

This sequence belongs to the MdcC family. In terms of processing, covalently binds the prosthetic group of malonate decarboxylase.

It localises to the cytoplasm. In terms of biological role, subunit of malonate decarboxylase, it is an acyl carrier protein to which acetyl and malonyl thioester residues are bound via a 2'-(5''-phosphoribosyl)-3'-dephospho-CoA prosthetic group and turn over during the catalytic mechanism. The chain is Malonate decarboxylase acyl carrier protein from Stutzerimonas stutzeri (strain A1501) (Pseudomonas stutzeri).